A 381-amino-acid chain; its full sequence is tRNA pseudouridine synthase D (381 aa).

The active-site Nucleophile is the aspartate 81. In terms of domain architecture, TRUD spans 160 to 335 (GMPNYFGSQR…TLGSRRFFWV (176 aa)).

This sequence belongs to the pseudouridine synthase TruD family.

It catalyses the reaction uridine(13) in tRNA = pseudouridine(13) in tRNA. Responsible for synthesis of pseudouridine from uracil-13 in transfer RNAs. This Helicobacter pylori (strain G27) protein is tRNA pseudouridine synthase D.